We begin with the raw amino-acid sequence, 525 residues long: Arabinose import ATP-binding protein AraG 2 (525 aa).

The segment at 1-25 is disordered; it reads MTDTTIRARGAQAAGSPAGAGPLDA. Low complexity predominate over residues 7 to 25; that stretch reads RARGAQAAGSPAGAGPLDA. 2 consecutive ABC transporter domains span residues 35–270 and 281–524; these read LELD…MVGR and REPG…LALP. 67 to 74 serves as a coordination point for ATP; it reads GENGAGKS.

Belongs to the ABC transporter superfamily. Arabinose importer (TC 3.A.1.2.2) family. The complex is composed of two ATP-binding proteins (AraG), two transmembrane proteins (AraH) and a solute-binding protein (AraF).

Its subcellular location is the cell inner membrane. The catalysed reaction is L-arabinose(out) + ATP + H2O = L-arabinose(in) + ADP + phosphate + H(+). Functionally, part of the ABC transporter complex AraFGH involved in arabinose import. Responsible for energy coupling to the transport system. This Burkholderia thailandensis (strain ATCC 700388 / DSM 13276 / CCUG 48851 / CIP 106301 / E264) protein is Arabinose import ATP-binding protein AraG 2.